The sequence spans 236 residues: LexA repressor (236 aa).

Positions 26 to 46 (FDEMKEALDLASKSGIHRLIT) form a DNA-binding region, H-T-H motif. The interval 84–107 (SPSVIEGGQGRSSPAPRPAANNDD) is disordered. Catalysis depends on for autocatalytic cleavage activity residues Ser157 and Lys195.

This sequence belongs to the peptidase S24 family. In terms of assembly, homodimer.

The catalysed reaction is Hydrolysis of Ala-|-Gly bond in repressor LexA.. Represses a number of genes involved in the response to DNA damage (SOS response), including recA and lexA. In the presence of single-stranded DNA, RecA interacts with LexA causing an autocatalytic cleavage which disrupts the DNA-binding part of LexA, leading to derepression of the SOS regulon and eventually DNA repair. The polypeptide is LexA repressor (Chelativorans sp. (strain BNC1)).